Reading from the N-terminus, the 88-residue chain is UPF0250 protein Shal_3239 (88 aa).

The protein belongs to the UPF0250 family.

This is UPF0250 protein Shal_3239 from Shewanella halifaxensis (strain HAW-EB4).